The primary structure comprises 552 residues: Glucose-6-phosphate isomerase (552 aa).

The Proton donor role is filled by Glu359. Catalysis depends on residues His390 and Lys514.

Belongs to the GPI family.

The protein localises to the cytoplasm. The enzyme catalyses alpha-D-glucose 6-phosphate = beta-D-fructose 6-phosphate. Its pathway is carbohydrate biosynthesis; gluconeogenesis. It participates in carbohydrate degradation; glycolysis; D-glyceraldehyde 3-phosphate and glycerone phosphate from D-glucose: step 2/4. Its function is as follows. Catalyzes the reversible isomerization of glucose-6-phosphate to fructose-6-phosphate. This chain is Glucose-6-phosphate isomerase, found in Streptomyces griseus subsp. griseus (strain JCM 4626 / CBS 651.72 / NBRC 13350 / KCC S-0626 / ISP 5235).